The following is a 144-amino-acid chain: Large ribosomal subunit protein uL15 (144 aa).

The disordered stretch occupies residues 1–53 (MRLNTLSPADGSKHAPKRLGRGIGSGLGKTGGRGHKGQNSRSGGGVRRGFEGG). Over residues 21 to 31 (RGIGSGLGKTG) the composition is skewed to gly residues.

The protein belongs to the universal ribosomal protein uL15 family. Part of the 50S ribosomal subunit.

Its function is as follows. Binds to the 23S rRNA. This chain is Large ribosomal subunit protein uL15, found in Erwinia tasmaniensis (strain DSM 17950 / CFBP 7177 / CIP 109463 / NCPPB 4357 / Et1/99).